The primary structure comprises 142 residues: Hemoglobin subunit alpha-4 (142 aa).

In terms of domain architecture, Globin spans 2–142; it reads TLTDSDKAAI…VATVLTSKYR (141 aa). His59 provides a ligand contact to O2. His88 serves as a coordination point for heme b.

The protein belongs to the globin family. In terms of assembly, heterotetramer of two alpha chains and two beta chains. As to expression, red blood cells.

Functionally, this is a larval (tadpole) alpha-globin. This chain is Hemoglobin subunit alpha-4 (hba4), found in Xenopus laevis (African clawed frog).